The primary structure comprises 30 residues: Photosystem I reaction center subunit XII (30 aa).

Residues 7–29 (VYTVLLIALLASVLAIRLGSTLY) form a helical membrane-spanning segment.

It belongs to the PsaM family.

The protein resides in the plastid. Its subcellular location is the chloroplast thylakoid membrane. This is Photosystem I reaction center subunit XII from Trieres chinensis (Marine centric diatom).